The sequence spans 1876 residues: 1,3-beta-glucan synthase component FKS1 (1876 aa).

Polar residues-rich tracts occupy residues 1–25 and 60–71; these read MNTD…QSQE and QPPNESYDQDYT. Residues 1 to 108 form a disordered region; the sequence is MNTDQQPYQG…PGTPGYDSYG (108 aa). Over 1-454 the chain is Cytoplasmic; the sequence is MNTDQQPYQG…WLHLVTNFNR (454 aa). Lys-259 is covalently cross-linked (Glycyl lysine isopeptide (Lys-Gly) (interchain with G-Cter in ubiquitin)). Phosphothreonine occurs at positions 269 and 272. Glycyl lysine isopeptide (Lys-Gly) (interchain with G-Cter in ubiquitin) cross-links involve residues Lys-275 and Lys-386. A helical membrane pass occupies residues 455-475; sequence IWVMHISIFWMYFAYNSPTFY. The Extracellular segment spans residues 476-492; that stretch reads THNYQQLVDNQPLAAYK. Residues 493–513 form a helical membrane-spanning segment; sequence WASCALGGTVASLIQIVATLC. The Cytoplasmic segment spans residues 514 to 531; the sequence is EWSFVPRKWAGAQHLSRR. A helical membrane pass occupies residues 532 to 552; it reads FWFLCIIFGINLGPIIFVFAY. Residues 553 to 563 are Extracellular-facing; sequence DKDTVYSTAAH. Residues 564–584 form a helical membrane-spanning segment; that stretch reads VVAAVMFFVAVATIIFFSIMP. Residues 585–621 are Cytoplasmic-facing; sequence LGGLFTSYMKKSTRRYVASQTFTAAFAPLHGLDRWMS. Residues 622–642 form a helical membrane-spanning segment; it reads YLVWVTVFAAKYSESYYFLVL. Residues 643 to 678 are Extracellular-facing; the sequence is SLRDPIRILSTTAMRCTGEYWWGAVLCKVQPKIVLG. The chain crosses the membrane as a helical span at residues 679–699; it reads LVIATDFILFFLDTYLWYIIV. Over 700-1358 the chain is Cytoplasmic; sequence NTIFSVGKSF…QPAVDWVRRY (659 aa). Glycyl lysine isopeptide (Lys-Gly) (interchain with G-Cter in ubiquitin) cross-links involve residues Lys-910 and Lys-915. A helical membrane pass occupies residues 1359 to 1379; sequence TLSIFIVFWIAFVPIVVQELI. Over 1380 to 1444 the chain is Extracellular; the sequence is ERGLWKATQR…RIPFSILYSR (65 aa). The chain crosses the membrane as a helical span at residues 1445–1465; it reads FAGSAIYMGARSMLMLLFGTV. At 1466-1469 the chain is on the cytoplasmic side; sequence AHWQ. A helical membrane pass occupies residues 1470-1490; that stretch reads APLLWFWASLSSLIFAPFVFN. Over 1491-1560 the chain is Extracellular; it reads PHQFAWEDFF…DASRAHRTNL (70 aa). Residues Lys-1539 and Lys-1547 each participate in a glycyl lysine isopeptide (Lys-Gly) (interchain with G-Cter in ubiquitin) cross-link. A helical transmembrane segment spans residues 1561 to 1581; sequence IMAEIIPCAIYAAGCFIAFTF. The Cytoplasmic segment spans residues 1582–1601; the sequence is INAQTGVKTTDDDRVNSVLR. Residues 1602–1622 form a helical membrane-spanning segment; that stretch reads IIICTLAPIAVNLGVLFFCMG. Residues 1623-1643 are Extracellular-facing; sequence MSCCSGPLFGMCCKKTGSVMA. A helical membrane pass occupies residues 1644–1664; the sequence is GIAHGVAVIVHIAFFIVMWVL. The Cytoplasmic segment spans residues 1665–1672; that stretch reads ESFNFVRM. The helical transmembrane segment at 1673-1695 threads the bilayer; sequence LIGVVTCIQCQRLIFHCMTALML. The Extracellular segment spans residues 1696–1802; the sequence is TREFKNDHAN…RKRMVKKYCS (107 aa). Residues 1803 to 1823 form a helical membrane-spanning segment; sequence LYFLVLAIFAGCIIGPAVASA. Over 1824 to 1876 the chain is Cytoplasmic; that stretch reads KIHKHIGDSLDGVVHNLFQPINTTNNDTGSQMSTYQSHYYTHTPSLKTWSTIK.

The protein belongs to the glycosyltransferase 48 family. Component of the 1,3-beta-glucan synthase (GS) complex, composed of two alternate catalytic subunits FKS1 or GSC2, and a regulatory subunit RHO1. Interacts with RHO1, which is a GTP-binding protein.

The protein localises to the mitochondrion. It is found in the cell membrane. It catalyses the reaction [(1-&gt;3)-beta-D-glucosyl](n) + UDP-alpha-D-glucose = [(1-&gt;3)-beta-D-glucosyl](n+1) + UDP + H(+). Alternate catalytic subunit of the 1,3-beta-glucan synthase (GS) complex. Synthesizes 1,3-beta-glucan, a major structural component of the yeast cell wall. Involved in cell wall synthesis, maintenance and remodeling. In Saccharomyces cerevisiae (strain ATCC 204508 / S288c) (Baker's yeast), this protein is 1,3-beta-glucan synthase component FKS1 (FKS1).